The primary structure comprises 242 residues: ATP-dependent dethiobiotin synthetase BioD (242 aa).

An ATP-binding site is contributed by 12–17; it reads SVGKTI. Residue T16 coordinates Mg(2+). K37 is a catalytic residue. D66 lines the ATP pocket. Residues D66 and E124 each coordinate Mg(2+). Position 184–185 (184–185) interacts with ATP; sequence NR.

The protein belongs to the dethiobiotin synthetase family. Homodimer. Requires Mg(2+) as cofactor.

The protein resides in the cytoplasm. The catalysed reaction is (7R,8S)-7,8-diammoniononanoate + CO2 + ATP = (4R,5S)-dethiobiotin + ADP + phosphate + 3 H(+). The protein operates within cofactor biosynthesis; biotin biosynthesis; biotin from 7,8-diaminononanoate: step 1/2. In terms of biological role, catalyzes a mechanistically unusual reaction, the ATP-dependent insertion of CO2 between the N7 and N8 nitrogen atoms of 7,8-diaminopelargonic acid (DAPA, also called 7,8-diammoniononanoate) to form a ureido ring. This is ATP-dependent dethiobiotin synthetase BioD from Mannheimia succiniciproducens (strain KCTC 0769BP / MBEL55E).